The chain runs to 204 residues: Thymidylate kinase (204 aa).

Residue 11-18 (GLDKSGKT) participates in ATP binding.

This sequence belongs to the thymidylate kinase family.

It carries out the reaction dTMP + ATP = dTDP + ADP. It participates in pyrimidine metabolism; dTTP biosynthesis. The sequence is that of Thymidylate kinase (TMK) from Vaccinia virus (strain Ankara) (VACV).